We begin with the raw amino-acid sequence, 185 residues long: MKTAQELRVGNVVMIGNDPLVVQKTEYNKSGRNAAVVKMKFKNLLTEAASEAVYKADDKFDVVILEKKEVTYSYFADPMYVFMDAEYNQYEVEADNMTDALNFLEDGMTCEVVFYNGKAISVDLPNSVVREITYTEPAVKGDTSGKVMKPAKIATGFELAVPLFCDIGDKIEIDTRTLEYKNRVK.

The protein belongs to the elongation factor P family.

The protein resides in the cytoplasm. The protein operates within protein biosynthesis; polypeptide chain elongation. In terms of biological role, involved in peptide bond synthesis. Stimulates efficient translation and peptide-bond synthesis on native or reconstituted 70S ribosomes in vitro. Probably functions indirectly by altering the affinity of the ribosome for aminoacyl-tRNA, thus increasing their reactivity as acceptors for peptidyl transferase. This Methylobacillus flagellatus (strain ATCC 51484 / DSM 6875 / VKM B-1610 / KT) protein is Elongation factor P.